The following is a 148-amino-acid chain: uncharacterized protein (148 aa).

Positions 1 to 20 (MNLTKLLPAFAAAVVLSACA) are cleaved as a signal peptide.

This is an uncharacterized protein from Haemophilus influenzae (strain ATCC 51907 / DSM 11121 / KW20 / Rd).